Reading from the N-terminus, the 68-residue chain is Metallothionein-3 (68 aa).

An N-acetylmethionine modification is found at M1. A beta region spans residues 1–30; that stretch reads MDPETCPCPSGGSCTCADSCKCEGCKCTSC. Residues C6, C8, C14, C16, C20, C22, C25, C27, and C30 each coordinate a divalent metal cation. The alpha stretch occupies residues 31–68; sequence KKSCCSCCPAECEKCAKDCVCKGGEAAEAEAEKCSCCQ. Position 33 is a phosphoserine (S33). A divalent metal cation contacts are provided by C34, C35, C37, C38, C42, C45, C49, C51, C64, C66, and C67.

The protein belongs to the metallothionein superfamily. Type 1 family. Abundant in a subset of astrocytes in the normal human brain, but greatly reduced in the Alzheimer disease (AD) brain.

In terms of biological role, binds heavy metals. Contains three zinc and three copper atoms per polypeptide chain and only a negligible amount of cadmium. Inhibits survival and neurite formation of cortical neurons in vitro. In Homo sapiens (Human), this protein is Metallothionein-3 (MT3).